Consider the following 959-residue polypeptide: Bifunctional premutilin synthase (959 aa).

The segment at 1-542 (MGLSEDLHAR…ALNVPIPRFD (542 aa)) is class II diterpene cyclase. A DXDD motif motif is present at residues 309 to 312 (DADM). Asp311 acts as the For class II diterpene cyclase activity in catalysis. Residues 543-959 (PSSISTLPAI…TANGSNGIHH (417 aa)) are class I diterpene synthase. Asp649 serves as the catalytic For class I diterpene synthase activity. 3 residues coordinate Mg(2+): Asp649, Asp653, and Asn824. The short motif at 649 to 653 (DDYLD) is the DDXXD motif element. The segment at 931 to 959 (KGTNGVKKINGSSTNGTKVTANGSNGIHH) is disordered. The span at 940 to 959 (NGSSTNGTKVTANGSNGIHH) shows a compositional bias: polar residues.

Belongs to the terpene synthase family. Mg(2+) serves as cofactor.

Its pathway is secondary metabolite biosynthesis; terpenoid biosynthesis. Functionally, bifunctional premutilin synthase; part of the gene cluster that mediates the biosynthesis of pleuromutilin, a tricyclic diterpene showing antibacterial properties. The geranylgeranyl diphosphate (GGPP) synthase catalyzes the first step in pleuromutilin biosynthesis. GGPP is then substrate of the premutilin synthase (PS) to yield premutilin. Premutilin synthase is a bifunctional enzyme composed of the fusion of a class II diterpene cyclase (DTC) and a class I diterpene synthase (DTS), with the corresponding domains and active sites containing characteristic aspartate-rich motifs. GGPP is first converted to mutildienyl-diphosphate (MPP) at the class II DTC site. MPP is subsequently further cyclized at the class I DTS site, followed by a 1,5-hydride shift and addition of water prior to terminating deprotonation, to yield premutilin. In addition to the aforementioned GGPP synthase and bifunctional diterpene synthase, the cluster also contains three cytochrome P450 monooxygenases, a short-chain alcohol dehydrogenase, and an acyltransferase, involved in the conversion of premutilin to pleuromutilin. The cytochrome P450 monooxygenases P450-1 and P450-2 hydroxylate premutilin at C-11 and C-3, respectively, producing 11-hydroxypremutilin and 3-hydroxypremutilin. The combination of the actions of both ple5 and ple6 leads to the production of 3,11-dihydroxypremutilin. The short chain dehydrogenase SDR further converts 3,11-dihydroxypremutilin into mutilin. The acetyltransferase ATF then acetylates mutilin to produce 14-O-acetylmutilin. Finally, the cytochrome P450 monooxygenase P450-3 catalyzes hydroxylation on the alpha position of the acetyl side chain of 14-O-acetylmutilin to yield pleuromutilin. The chain is Bifunctional premutilin synthase from Clitopilus passeckerianus (Pleurotus passeckerianus).